The sequence spans 292 residues: MNDYIIRATAANSQIRAFACISTEIVETARQAHNTSPVVTAALGRLLTGGAMMGSMMKGEKDLLTLKIACSGPIGGLTVTADAGANVKGYANQNVVNLPPSPKGKLDVGKALDIGVLSVIKDMGLKEPYVGQTDLVTGEIAEDLTYYFATSEQVPSSVALGVLMNRDNTVRCAGGFIIQLLPFAEEEVIEKLEKKIGEITSVTSMLDKGMTPEEILQELLGEFGLTILDKIPTKFTCNCTKERVEKAIVSIGKKDLQEMIDDEKPIEVNCHFCNTNYEFSVEELKDIITRSN.

Intrachain disulfides connect cysteine 237–cysteine 239 and cysteine 270–cysteine 273.

Belongs to the HSP33 family. In terms of processing, under oxidizing conditions two disulfide bonds are formed involving the reactive cysteines. Under reducing conditions zinc is bound to the reactive cysteines and the protein is inactive.

Its subcellular location is the cytoplasm. Redox regulated molecular chaperone. Protects both thermally unfolding and oxidatively damaged proteins from irreversible aggregation. Plays an important role in the bacterial defense system toward oxidative stress. In Lachnoclostridium phytofermentans (strain ATCC 700394 / DSM 18823 / ISDg) (Clostridium phytofermentans), this protein is 33 kDa chaperonin.